The following is a 187-amino-acid chain: dCTP deaminase (187 aa).

DCTP-binding positions include 110–115, 134–136, glutamine 155, tyrosine 169, and glutamine 179; these read KSTYAR and TLE. Glutamate 136 acts as the Proton donor/acceptor in catalysis.

The protein belongs to the dCTP deaminase family. Homotrimer.

The catalysed reaction is dCTP + H2O + H(+) = dUTP + NH4(+). It participates in pyrimidine metabolism; dUMP biosynthesis; dUMP from dCTP (dUTP route): step 1/2. Its function is as follows. Catalyzes the deamination of dCTP to dUTP. The chain is dCTP deaminase from Bordetella pertussis (strain Tohama I / ATCC BAA-589 / NCTC 13251).